We begin with the raw amino-acid sequence, 248 residues long: MEEGGSSHDAESSKKLGRGKIEIKRIENTTNRQVTFCKRRNGLLKKAYELSVLCDAEVALVIFSTRGRLYEYANNSVRGTIERYKKACSDAVNPPSVTEANTQYYQQEASKLRRQIRDIQNSNRHIVGESLGSLNFKELKNLEGRLEKGISRVRSKKNELLVAEIEYMQKREMELQHNNMYLRAKIAEGARLNPDQQESSVIQGTTVYESGVSSHDQSQHYNRNYIPVNLLEPNQQFSGQDQPPLQLV.

One can recognise an MADS-box domain in the interval 18-72 (RGKIEIKRIENTTNRQVTFCKRRNGLLKKAYELSVLCDAEVALVIFSTRGRLYEY). The 91-residue stretch at 102–192 (TQYYQQEASK…RAKIAEGARL (91 aa)) folds into the K-box domain.

Interacts with AGL15 and AGL16.

It localises to the nucleus. Probable transcription factor. Interacts genetically with TT16/AGL32 in a partially antagonistic manner during flower development. Is essential for the coordination of cell divisions in ovule, seed coat development and endosperm formation. In Arabidopsis thaliana (Mouse-ear cress), this protein is Agamous-like MADS-box protein AGL1 (AGL1).